The sequence spans 241 residues: MEMERINENTIRVVIGNDDLTERGITVLDLLGNHKQIEGFFYSILEEVDVDHQFQDNDAVTFQVLPNRNGLELFISKNTDEDDVADESQGDASVDSEHPDQVSDQIKEHLLEKDNQKDFFSGFKSAANESNDIEDYLNDSGQPTTTRVVKLHSFEDMISLARVLRLENAASNLYRYQDAYYLELVFFVNESSRESIKDELAVAYEYAERTKVAPDVLAEHGQLIMDNSALELTRFHFLGNS.

A disordered region spans residues 77–102 (KNTDEDDVADESQGDASVDSEHPDQV). The span at 80–89 (DEDDVADESQ) shows a compositional bias: acidic residues.

Belongs to the MecA family. As to quaternary structure, homodimer.

Functionally, enables the recognition and targeting of unfolded and aggregated proteins to the ClpC protease or to other proteins involved in proteolysis. The sequence is that of Adapter protein MecA from Levilactobacillus brevis (strain ATCC 367 / BCRC 12310 / CIP 105137 / JCM 1170 / LMG 11437 / NCIMB 947 / NCTC 947) (Lactobacillus brevis).